A 62-amino-acid chain; its full sequence is Prokaryotic ubiquitin-like protein Pup 2 (62 aa).

The segment at 1 to 34 (MRQEKPKRHGREDDEPPEPAPAGRARDTTVGDDT) is disordered. The segment at 21–56 (PAGRARDTTVGDDTDELLDEIDGVLEENAVEFVRSY) is ARC ATPase binding. An Isoglutamyl lysine isopeptide (Glu-Lys) (interchain with K-? in acceptor proteins) cross-link involves residue E62.

Belongs to the prokaryotic ubiquitin-like protein family. As to quaternary structure, strongly interacts with the proteasome-associated ATPase ARC through a hydrophobic interface; the interacting region of Pup lies in its C-terminal half. There is one Pup binding site per ARC hexamer ring.

The protein operates within protein degradation; proteasomal Pup-dependent pathway. Its function is as follows. Protein modifier that is covalently attached to lysine residues of substrate proteins, thereby targeting them for proteasomal degradation. The tagging system is termed pupylation. This Saccharopolyspora erythraea (strain ATCC 11635 / DSM 40517 / JCM 4748 / NBRC 13426 / NCIMB 8594 / NRRL 2338) protein is Prokaryotic ubiquitin-like protein Pup 2.